Here is a 5154-residue protein sequence, read N- to C-terminus: Hydrocephalus-inducing protein (5154 aa).

The segment at 409 to 800 is interaction with KIF9; sequence MILEDSVLDP…VLLSSPSPCG (392 aa). The span at 997–1009 shows a compositional bias: basic and acidic residues; sequence RPKEKQSKKEPGK. Disordered stretches follow at residues 997 to 1033, 1966 to 1988, 2193 to 2222, 2383 to 2423, 2521 to 2572, and 2706 to 2762; these read RPKE…GNPV, ENEE…TSIS, ADSH…SPLL, KLQQ…QGAT, HTGT…KAER, and KAQE…DIDQ. Residues 1010-1024 are compositionally biased toward low complexity; it reads KGSTSSSRRQSKASQ. Positions 1948-1977 form a coiled coil; the sequence is EMKKSKEEHMKAKYMENLENEEEEMNTSDQ. Composition is skewed to polar residues over residues 1974–1988 and 2209–2220; these read TSDQ…TSIS and SETPQVQISSSP. Positions 2308-2444 form a coiled coil; it reads YVVMKAQEKA…LKMESIERKV (137 aa). Basic and acidic residues-rich tracts occupy residues 2383-2398, 2523-2535, 2548-2572, and 2721-2734; these read KLQQ…DELK, GTDE…DDQR, KDRE…KAER, and KLKD…ETQK. Positions 2543-2588 form a coiled coil; sequence GRKGRKDRERERLEKERAEKERLEREKAERERLEKLKALEERSDVE.

In terms of assembly, interacts with KIF9. Expressed in brain and testis. Expressed in ciliated epithelial cells lining bronchi and oviduct, and in spermatocytes.

It is found in the cell projection. The protein localises to the cilium. Its subcellular location is the cytoplasm. It localises to the cytoskeleton. The protein resides in the cilium axoneme. It is found in the flagellum. In terms of biological role, required for ciliary motility. The protein is Hydrocephalus-inducing protein (Hydin) of Mus musculus (Mouse).